The chain runs to 357 residues: SNF1-related protein kinase regulatory subunit gamma-like PV42b (357 aa).

4 consecutive CBS domains span residues 16-97, 113-185, 198-273, and 293-351; these read MIDK…DGES, HCPE…SSQL, AIHN…WLPL, and STPG…ALLS.

This sequence belongs to the 5'-AMP-activated protein kinase gamma subunit family. Expressed highly in rosette leaves, cauline leaves, open flowers, developing siliques and dry seeds, but at a low level in stems and floral buds.

Functionally, plays redundant role with PV42a in regulating male gametogenesis and pollen tube guidance. The protein is SNF1-related protein kinase regulatory subunit gamma-like PV42b (PV42B) of Arabidopsis thaliana (Mouse-ear cress).